A 155-amino-acid polypeptide reads, in one-letter code: Deoxyuridine 5'-triphosphate nucleotidohydrolase (155 aa).

Substrate contacts are provided by residues 72–74 (RSG), Asn85, 89–91 (TVD), and Lys99.

The protein belongs to the dUTPase family. The cofactor is Mg(2+).

The enzyme catalyses dUTP + H2O = dUMP + diphosphate + H(+). Its pathway is pyrimidine metabolism; dUMP biosynthesis; dUMP from dCTP (dUTP route): step 2/2. In terms of biological role, this enzyme is involved in nucleotide metabolism: it produces dUMP, the immediate precursor of thymidine nucleotides and it decreases the intracellular concentration of dUTP so that uracil cannot be incorporated into DNA. In Parvibaculum lavamentivorans (strain DS-1 / DSM 13023 / NCIMB 13966), this protein is Deoxyuridine 5'-triphosphate nucleotidohydrolase.